The primary structure comprises 416 residues: Na(+)/H(+) antiporter NhaA (416 aa).

A run of 11 helical transmembrane segments spans residues 39 to 59 (GIVL…PWAA), 82 to 102 (LHFW…GLEI), 119 to 139 (LPVL…LALV), 146 to 166 (GWAV…ALLG), 175 to 195 (VFLL…IALF), 198 to 218 (GGLQ…VLLL), 234 to 254 (AVLW…GVVL), 281 to 301 (PWVT…VALG), 315 to 335 (LLMA…VLLA), 353 to 373 (WGGL…AIFI), and 390 to 410 (GVLL…WWLQ).

It belongs to the NhaA Na(+)/H(+) (TC 2.A.33) antiporter family.

The protein localises to the cell inner membrane. The enzyme catalyses Na(+)(in) + 2 H(+)(out) = Na(+)(out) + 2 H(+)(in). Na(+)/H(+) antiporter that extrudes sodium in exchange for external protons. The polypeptide is Na(+)/H(+) antiporter NhaA (Acidovorax sp. (strain JS42)).